The sequence spans 366 residues: Carbamoyl phosphate synthase small chain (366 aa).

Residues 1–168 (MYGILVLEDG…KETVIYNAED (168 aa)) are CPSase. 3 residues coordinate L-glutamine: Ser45, Gly220, and Gly222. A Glutamine amidotransferase type-1 domain is found at 172–363 (RCVLIDCGVK…VELGIKFKAE (192 aa)). Residue Cys247 is the Nucleophile of the active site. Residues Leu248, Gln251, Asn289, Gly291, and Phe292 each coordinate L-glutamine. Residues His336 and Glu338 contribute to the active site.

The protein belongs to the CarA family. In terms of assembly, composed of two chains; the small (or glutamine) chain promotes the hydrolysis of glutamine to ammonia, which is used by the large (or ammonia) chain to synthesize carbamoyl phosphate. Tetramer of heterodimers (alpha,beta)4.

It catalyses the reaction hydrogencarbonate + L-glutamine + 2 ATP + H2O = carbamoyl phosphate + L-glutamate + 2 ADP + phosphate + 2 H(+). It carries out the reaction L-glutamine + H2O = L-glutamate + NH4(+). It participates in amino-acid biosynthesis; L-arginine biosynthesis; carbamoyl phosphate from bicarbonate: step 1/1. Its pathway is pyrimidine metabolism; UMP biosynthesis via de novo pathway; (S)-dihydroorotate from bicarbonate: step 1/3. Its function is as follows. Small subunit of the glutamine-dependent carbamoyl phosphate synthetase (CPSase). CPSase catalyzes the formation of carbamoyl phosphate from the ammonia moiety of glutamine, carbonate, and phosphate donated by ATP, constituting the first step of 2 biosynthetic pathways, one leading to arginine and/or urea and the other to pyrimidine nucleotides. The small subunit (glutamine amidotransferase) binds and cleaves glutamine to supply the large subunit with the substrate ammonia. The protein is Carbamoyl phosphate synthase small chain of Methanococcus maripaludis (strain C5 / ATCC BAA-1333).